The chain runs to 262 residues: Small ribosomal subunit protein uS2 (262 aa).

This sequence belongs to the universal ribosomal protein uS2 family.

This is Small ribosomal subunit protein uS2 from Borrelia garinii subsp. bavariensis (strain ATCC BAA-2496 / DSM 23469 / PBi) (Borreliella bavariensis).